Here is a 243-residue protein sequence, read N- to C-terminus: Ribosomal RNA small subunit methyltransferase J (243 aa).

S-adenosyl-L-methionine is bound by residues 112–113 (ER) and D164.

The protein belongs to the methyltransferase superfamily. RsmJ family.

It is found in the cytoplasm. It catalyses the reaction guanosine(1516) in 16S rRNA + S-adenosyl-L-methionine = N(2)-methylguanosine(1516) in 16S rRNA + S-adenosyl-L-homocysteine + H(+). Its function is as follows. Specifically methylates the guanosine in position 1516 of 16S rRNA. This is Ribosomal RNA small subunit methyltransferase J from Legionella pneumophila (strain Paris).